Consider the following 501-residue polypeptide: Cobyric acid synthase (501 aa).

Residues 253 to 450 (EIEIAVLKLP…LHGIFENGRW (198 aa)) enclose the GATase cobBQ-type domain. The active-site Nucleophile is the C334. Residue H442 is part of the active site.

It belongs to the CobB/CobQ family. CobQ subfamily.

Its pathway is cofactor biosynthesis; adenosylcobalamin biosynthesis. In terms of biological role, catalyzes amidations at positions B, D, E, and G on adenosylcobyrinic A,C-diamide. NH(2) groups are provided by glutamine, and one molecule of ATP is hydrogenolyzed for each amidation. The sequence is that of Cobyric acid synthase from Prochlorococcus marinus (strain MIT 9313).